Here is a 305-residue protein sequence, read N- to C-terminus: Probable cell division protein WhiA (305 aa).

Residues 269–302 constitute a DNA-binding region (H-T-H motif); the sequence is TIKELGELLEPSLGKSGVNHRLRKLVEQANELRK.

This sequence belongs to the WhiA family.

Involved in cell division and chromosome segregation. The protein is Probable cell division protein WhiA of Lactococcus lactis subsp. lactis (strain IL1403) (Streptococcus lactis).